The primary structure comprises 199 residues: Recombination protein RecR (199 aa).

Residues 57–72 (CPICGNITEKEVCDIC) form a C4-type zinc finger. The 97-residue stretch at 80–176 (TTIMVVEQPK…KVTRLAAGLS (97 aa)) folds into the Toprim domain.

Belongs to the RecR family.

May play a role in DNA repair. It seems to be involved in an RecBC-independent recombinational process of DNA repair. It may act with RecF and RecO. This chain is Recombination protein RecR, found in Lactobacillus helveticus (strain DPC 4571).